A 96-amino-acid chain; its full sequence is Large ribosomal subunit protein bL28 (96 aa).

The segment covering 1-22 (MSRSCELTGKGVQSGNNVSHAN) has biased composition (polar residues). Residues 1–24 (MSRSCELTGKGVQSGNNVSHANNK) form a disordered region.

Belongs to the bacterial ribosomal protein bL28 family.

In Sinorhizobium medicae (strain WSM419) (Ensifer medicae), this protein is Large ribosomal subunit protein bL28.